Here is a 352-residue protein sequence, read N- to C-terminus: Photosystem II D2 protein (352 aa).

A helical transmembrane segment spans residues Cys-40 to Thr-60. His-117 contributes to the chlorophyll a binding site. The chain crosses the membrane as a helical span at residues Gly-124–Pro-140. Pheophytin a-binding residues include Gln-129 and Asn-142. A helical transmembrane segment spans residues Val-152 to Ser-165. His-197 contacts chlorophyll a. A helical transmembrane segment spans residues Ala-207–Asp-227. Residues His-214 and Phe-261 each coordinate a plastoquinone. His-214 contributes to the Fe cation binding site. His-268 contributes to the Fe cation binding site. A helical transmembrane segment spans residues Gly-278 to Arg-294.

It belongs to the reaction center PufL/M/PsbA/D family. As to quaternary structure, PSII is composed of 1 copy each of membrane proteins PsbA, PsbB, PsbC, PsbD, PsbE, PsbF, PsbH, PsbI, PsbJ, PsbK, PsbL, PsbM, PsbT, PsbY, PsbZ, Psb30/Ycf12, at least 3 peripheral proteins of the oxygen-evolving complex and a large number of cofactors. It forms dimeric complexes. The D1/D2 heterodimer binds P680, chlorophylls that are the primary electron donor of PSII, and subsequent electron acceptors. It shares a non-heme iron and each subunit binds pheophytin, quinone, additional chlorophylls, carotenoids and lipids. There is also a Cl(-1) ion associated with D1 and D2, which is required for oxygen evolution. The PSII complex binds additional chlorophylls, carotenoids and specific lipids. serves as cofactor.

It localises to the plastid. The protein resides in the chloroplast thylakoid membrane. It catalyses the reaction 2 a plastoquinone + 4 hnu + 2 H2O = 2 a plastoquinol + O2. Its function is as follows. Photosystem II (PSII) is a light-driven water:plastoquinone oxidoreductase that uses light energy to abstract electrons from H(2)O, generating O(2) and a proton gradient subsequently used for ATP formation. It consists of a core antenna complex that captures photons, and an electron transfer chain that converts photonic excitation into a charge separation. The D1/D2 (PsbA/PsbD) reaction center heterodimer binds P680, the primary electron donor of PSII as well as several subsequent electron acceptors. D2 is needed for assembly of a stable PSII complex. The chain is Photosystem II D2 protein from Bigelowiella natans (Pedinomonas minutissima).